A 38-amino-acid chain; its full sequence is Cytochrome b6-f complex subunit 5 (38 aa).

A helical transmembrane segment spans residues 5–25 (LLCGIVLGLIPVTLLGLFVDA).

This sequence belongs to the PetG family. As to quaternary structure, the 4 large subunits of the cytochrome b6-f complex are cytochrome b6, subunit IV (17 kDa polypeptide, PetD), cytochrome f and the Rieske protein, while the 4 small subunits are PetG, PetL, PetM and PetN. The complex functions as a dimer.

The protein localises to the cellular thylakoid membrane. Functionally, component of the cytochrome b6-f complex, which mediates electron transfer between photosystem II (PSII) and photosystem I (PSI), cyclic electron flow around PSI, and state transitions. PetG is required for either the stability or assembly of the cytochrome b6-f complex. This chain is Cytochrome b6-f complex subunit 5, found in Prochlorococcus marinus (strain MIT 9313).